We begin with the raw amino-acid sequence, 1482 residues long: Calcium-dependent protein kinase 6 (1482 aa).

Disordered stretches follow at residues 250–320 (TNNY…IRPN) and 739–760 (SENF…DDSN). The span at 254–264 (AHDNNQDSNSY) shows a compositional bias: polar residues. Residues 277–301 (EEDNDTGDTYADNEEDEDNRDDNDD) are compositionally biased toward acidic residues. A compositionally biased stretch (polar residues) spans 302–318 (YSQYNQCEVESDTNQIR). Residues 739–748 (SENFSNNFND) are compositionally biased toward low complexity. A compositionally biased stretch (basic and acidic residues) spans 749 to 760 (NKQKSLKNDDSN). EF-hand domains are found at residues 931 to 966 (IFER…LCYN) and 972 to 1007 (VDKK…LLKQ). Positions 985, 987, 989, 991, and 996 each coordinate Ca(2+). The 253-residue stretch at 1043–1295 (LSFKKILGCG…AAVLLHHPWF (253 aa)) folds into the Protein kinase domain. ATP is bound by residues 1049–1057 (LGCGAFGEV) and K1072. Catalysis depends on D1162, which acts as the Proton acceptor. EF-hand domains are found at residues 1338-1373 (NHVK…AGVK), 1376-1406 (DINR…RWKN), 1407-1442 (IDST…NGVN), and 1468-1482 (KISF…LSTF). D1351, N1353, N1355, S1357, and E1362 together coordinate Ca(2+). D1420, D1422, D1424, Y1426, and D1431 together coordinate Ca(2+).

This sequence belongs to the protein kinase superfamily. Ser/Thr protein kinase family. CDPK subfamily. Mg(2+) serves as cofactor.

It catalyses the reaction L-seryl-[protein] + ATP = O-phospho-L-seryl-[protein] + ADP + H(+). It carries out the reaction L-threonyl-[protein] + ATP = O-phospho-L-threonyl-[protein] + ADP + H(+). Activated by calcium. Its function is as follows. Calcium-dependent protein kinase which acts as a sensor and effector of intracellular Ca(2+) levels. In sporozoites, probably involved in the secretion of the cysteine protease that cleaves circumsporozoite protein CSP, thereby exposing CSP TSR domain, which binds with high affinity to highly sulfated heparan sulfate proteoglycans (HSPGs), resulting in productive invasion of the host hepatocytes. This chain is Calcium-dependent protein kinase 6, found in Plasmodium berghei (strain Anka).